A 424-amino-acid polypeptide reads, in one-letter code: 3-ketoacyl-CoA thiolase A, peroxisomal (424 aa).

The transit peptide at 1 to 26 (MHRLQVVLGHLAGRPESSSALQAAPC) directs the protein to the peroxisome. The interval 1 to 26 (MHRLQVVLGHLAGRPESSSALQAAPC) is PTS2-type peroxisomal targeting signal. C123 acts as the Acyl-thioester intermediate in catalysis. Residues K173 and K234 each carry the N6-acetyllysine modification. Active-site proton acceptor residues include H377 and C408.

Belongs to the thiolase-like superfamily. Thiolase family. As to quaternary structure, homodimer. Interacts (via PTS2-type peroxisomal targeting signal region) with PEX7; leading to its translocation into peroxisomes. In terms of tissue distribution, mainly expressed in liver and intestine.

It localises to the peroxisome. The enzyme catalyses an acyl-CoA + acetyl-CoA = a 3-oxoacyl-CoA + CoA. It catalyses the reaction 2 acetyl-CoA = acetoacetyl-CoA + CoA. The catalysed reaction is tetradecanoyl-CoA + acetyl-CoA = 3-oxohexadecanoyl-CoA + CoA. It carries out the reaction hexanoyl-CoA + acetyl-CoA = 3-oxooctanoyl-CoA + CoA. The enzyme catalyses 3-oxohexadecanedioyl-CoA + CoA = tetradecanedioyl-CoA + acetyl-CoA. It catalyses the reaction 3-oxo-(6Z,9Z,12Z,15Z,18Z,21Z)-tetracosahexaenoyl-CoA + CoA = (4Z,7Z,10Z,13Z,16Z,19Z)-docosahexaenoyl-CoA + acetyl-CoA. Its pathway is lipid metabolism; peroxisomal fatty acid beta-oxidation. In terms of biological role, responsible for the thiolytic cleavage of straight chain 3-keto fatty acyl-CoAs (3-oxoacyl-CoAs). Plays an important role in fatty acid peroxisomal beta-oxidation. Catalyzes the cleavage of short, medium, long, and very long straight chain 3-oxoacyl-CoAs. This chain is 3-ketoacyl-CoA thiolase A, peroxisomal, found in Mus musculus (Mouse).